The following is a 439-amino-acid chain: Chaperone SurA (439 aa).

A signal peptide spans 1 to 27 (MRRISSRLSLVLFAALSCATALFPAHA). PpiC domains follow at residues 180–281 (GEEF…KLLD) and 293–391 (LEQT…QVEA).

Its subcellular location is the periplasm. The enzyme catalyses [protein]-peptidylproline (omega=180) = [protein]-peptidylproline (omega=0). Its function is as follows. Chaperone involved in the correct folding and assembly of outer membrane proteins. Recognizes specific patterns of aromatic residues and the orientation of their side chains, which are found more frequently in integral outer membrane proteins. May act in both early periplasmic and late outer membrane-associated steps of protein maturation. This Aromatoleum aromaticum (strain DSM 19018 / LMG 30748 / EbN1) (Azoarcus sp. (strain EbN1)) protein is Chaperone SurA.